The sequence spans 347 residues: Ribosomal RNA small subunit methyltransferase C (347 aa).

Belongs to the methyltransferase superfamily. RsmC family. As to quaternary structure, monomer.

The protein localises to the cytoplasm. The catalysed reaction is guanosine(1207) in 16S rRNA + S-adenosyl-L-methionine = N(2)-methylguanosine(1207) in 16S rRNA + S-adenosyl-L-homocysteine + H(+). Functionally, specifically methylates the guanine in position 1207 of 16S rRNA in the 30S particle. The protein is Ribosomal RNA small subunit methyltransferase C of Shewanella putrefaciens (strain CN-32 / ATCC BAA-453).